We begin with the raw amino-acid sequence, 230 residues long: Protein FAM3A (230 aa).

A signal peptide spans 1 to 33 (MRLAGPLRIVALIIIMGLTWILVTILLGGPGVG). Disulfide bonds link C59-C87 and C65-C222. The GG-type lectin domain occupies 68–226 (EHLSFRIVSG…LEMEGCIPRR (159 aa)).

The protein belongs to the FAM3 family.

It is found in the secreted. This Mus musculus (Mouse) protein is Protein FAM3A (Fam3a).